Reading from the N-terminus, the 101-residue chain is Small ribosomal subunit protein uS14 (101 aa).

Positions M1–N10 are enriched in basic and acidic residues. The segment at M1–K23 is disordered. Basic residues predominate over residues N11–K23.

This sequence belongs to the universal ribosomal protein uS14 family. In terms of assembly, part of the 30S ribosomal subunit. Contacts proteins S3 and S10.

Functionally, binds 16S rRNA, required for the assembly of 30S particles and may also be responsible for determining the conformation of the 16S rRNA at the A site. The sequence is that of Small ribosomal subunit protein uS14 from Nitrobacter winogradskyi (strain ATCC 25391 / DSM 10237 / CIP 104748 / NCIMB 11846 / Nb-255).